The chain runs to 270 residues: Formamidopyrimidine-DNA glycosylase (270 aa).

The active-site Schiff-base intermediate with DNA is Pro-2. Glu-3 functions as the Proton donor in the catalytic mechanism. The active-site Proton donor; for beta-elimination activity is Lys-58. His-91, Arg-110, and Lys-151 together coordinate DNA. The segment at Phe-236 to Arg-270 adopts an FPG-type zinc-finger fold. The active-site Proton donor; for delta-elimination activity is the Arg-260.

It belongs to the FPG family. Monomer. It depends on Zn(2+) as a cofactor.

It catalyses the reaction Hydrolysis of DNA containing ring-opened 7-methylguanine residues, releasing 2,6-diamino-4-hydroxy-5-(N-methyl)formamidopyrimidine.. The enzyme catalyses 2'-deoxyribonucleotide-(2'-deoxyribose 5'-phosphate)-2'-deoxyribonucleotide-DNA = a 3'-end 2'-deoxyribonucleotide-(2,3-dehydro-2,3-deoxyribose 5'-phosphate)-DNA + a 5'-end 5'-phospho-2'-deoxyribonucleoside-DNA + H(+). In terms of biological role, involved in base excision repair of DNA damaged by oxidation or by mutagenic agents. Acts as a DNA glycosylase that recognizes and removes damaged bases. Has a preference for oxidized purines, such as 7,8-dihydro-8-oxoguanine (8-oxoG). Has AP (apurinic/apyrimidinic) lyase activity and introduces nicks in the DNA strand. Cleaves the DNA backbone by beta-delta elimination to generate a single-strand break at the site of the removed base with both 3'- and 5'-phosphates. The protein is Formamidopyrimidine-DNA glycosylase of Pseudomonas savastanoi pv. phaseolicola (strain 1448A / Race 6) (Pseudomonas syringae pv. phaseolicola (strain 1448A / Race 6)).